The chain runs to 243 residues: Probable transcriptional regulatory protein BP2308 (243 aa).

Positions 1–21 are disordered; it reads MAGHSKWANIQHRKGRQDAKR.

Belongs to the TACO1 family.

It localises to the cytoplasm. The chain is Probable transcriptional regulatory protein BP2308 from Bordetella pertussis (strain Tohama I / ATCC BAA-589 / NCTC 13251).